A 1097-amino-acid polypeptide reads, in one-letter code: Error-prone DNA polymerase (1097 aa).

Residues Pro-1039 to Arg-1097 form a disordered region. Basic and acidic residues predominate over residues Asp-1055 to Asp-1066.

It belongs to the DNA polymerase type-C family. DnaE2 subfamily.

It localises to the cytoplasm. The catalysed reaction is DNA(n) + a 2'-deoxyribonucleoside 5'-triphosphate = DNA(n+1) + diphosphate. DNA polymerase involved in damage-induced mutagenesis and translesion synthesis (TLS). It is not the major replicative DNA polymerase. The protein is Error-prone DNA polymerase of Allorhizobium ampelinum (strain ATCC BAA-846 / DSM 112012 / S4) (Agrobacterium vitis (strain S4)).